The sequence spans 461 residues: pre-mRNA splicing regulator USH1G (461 aa).

ANK repeat units lie at residues D31–K60, W64–C93, and D97–S126. The segment at L329 to C368 is disordered. An SAM domain is found at L385–R447. Phosphoserine is present on S422.

In terms of assembly, part of a complex composed of USH1C, USH1G and MYO7A. Interacts with USH1C (via the first PDZ domain). Interacts with PDZD7. Interacts with CDH23 and PCDH15; these interactions may recruit USH1G to the plasma membrane. Interacts with intraflagellar transport proteins IFT20, IFT52 and IFT57. Interacts with splicing factors SF3B1, PRPF6, PRPF31 and SON. Interacts with the U4/U6.U5 tri-small nuclear ribonucleoprotein (tri-snRNP) complex in the presence of pre-mRNAs. Interacts (via SAM domain) with MAGI2 (via PDZ 6 domain); the interaction is triggered by phosphorylation of USH1G by CK2 and negatively regulates MAGI2-mediated endocytosis. As to expression, detected in stereocilia from cochlear hair cells (at protein level). Detected in retinal photoreceptor cell cilia (at protein level). Highly expressed in the cochlea, testis, cerebellum and eye, and low levels in brain, thymus and spleen. Significant signals detected in the neurosensory epithelium of inner ear cochlea and saccule, especially in inner and outer hair cells.

The protein localises to the cytoplasm. Its subcellular location is the cytosol. It is found in the cytoskeleton. It localises to the cell membrane. The protein resides in the cell projection. The protein localises to the cilium. Its subcellular location is the nucleus speckle. It is found in the nucleus. It localises to the cajal body. The protein resides in the microtubule organizing center. The protein localises to the centrosome. Its subcellular location is the photoreceptor inner segment. In terms of biological role, plays a role in pre-mRNA splicing by regulating the release and transfer of U4/U6.U5 tri-small nuclear ribonucleoprotein (tri-snRNP) complexes from their assembly site in Cajal bodies to nuclear speckles, thereby contributing to the assembly of the pre-catalytic spliceosome on target pre-mRNAs. May also participate in recycling of snRNPs back to Cajal bodies during splicing. Plays a role in regulating MAGI2-mediated endocytosis. Anchoring/scaffolding protein that is a part of the functional network formed by USH1C, USH1G, CDH23 and MYO7A that mediates mechanotransduction in cochlear hair cells. Required for normal development and maintenance of cochlear hair cell bundles. Required for normal hearing. This is pre-mRNA splicing regulator USH1G (Ush1g) from Mus musculus (Mouse).